The chain runs to 334 residues: Probable peptidoglycan endopeptidase LytE (334 aa).

Positions 1–25 are cleaved as a signal peptide; sequence MKKQIITATTAVVLGSTLFAGAASA. 3 consecutive LysM domains span residues 26 to 69, 86 to 129, and 149 to 192; these read QSIK…TLSI, STYK…VLKL, and STYK…VLKV. Disordered stretches follow at residues 70 to 89, 131 to 153, and 195 to 215; these read NGKS…STYK, GSTS…TYKV, and TSTS…KTSS. Composition is skewed to low complexity over residues 72 to 87 and 132 to 153; these read KSTS…SSST and STSS…TYKV. The NlpC/P60 domain occupies 217-334; the sequence is SLNVSKLVSD…KPRYLGAKRF (118 aa). Cys-247 serves as the catalytic Nucleophile. The active-site Proton acceptor is His-296. His-308 is a catalytic residue.

It belongs to the peptidase C40 family.

The protein localises to the secreted. Its subcellular location is the cell wall. Functionally, cell wall hydrolase that cleaves gamma-D-glutamate-meso-diaminopimelate bonds in peptidoglycan. Seems to play a role in cell separation during vegetative growth. This Bacillus subtilis (strain 168) protein is Probable peptidoglycan endopeptidase LytE (lytE).